We begin with the raw amino-acid sequence, 220 residues long: ATP-dependent Clp protease proteolytic subunit (220 aa).

The Nucleophile role is filled by Ser-122. His-147 is an active-site residue.

The protein belongs to the peptidase S14 family. In terms of assembly, fourteen ClpP subunits assemble into 2 heptameric rings which stack back to back to give a disk-like structure with a central cavity, resembling the structure of eukaryotic proteasomes.

It is found in the cytoplasm. It carries out the reaction Hydrolysis of proteins to small peptides in the presence of ATP and magnesium. alpha-casein is the usual test substrate. In the absence of ATP, only oligopeptides shorter than five residues are hydrolyzed (such as succinyl-Leu-Tyr-|-NHMec, and Leu-Tyr-Leu-|-Tyr-Trp, in which cleavage of the -Tyr-|-Leu- and -Tyr-|-Trp bonds also occurs).. Functionally, cleaves peptides in various proteins in a process that requires ATP hydrolysis. Has a chymotrypsin-like activity. Plays a major role in the degradation of misfolded proteins. This chain is ATP-dependent Clp protease proteolytic subunit, found in Colwellia psychrerythraea (strain 34H / ATCC BAA-681) (Vibrio psychroerythus).